Consider the following 186-residue polypeptide: ATP synthase subunit delta (186 aa).

The protein belongs to the ATPase delta chain family. As to quaternary structure, F-type ATPases have 2 components, F(1) - the catalytic core - and F(0) - the membrane proton channel. F(1) has five subunits: alpha(3), beta(3), gamma(1), delta(1), epsilon(1). CF(0) has four main subunits: a(1), b(1), b'(1) and c(10-14). The alpha and beta chains form an alternating ring which encloses part of the gamma chain. F(1) is attached to F(0) by a central stalk formed by the gamma and epsilon chains, while a peripheral stalk is formed by the delta, b and b' chains.

It localises to the cell inner membrane. F(1)F(0) ATP synthase produces ATP from ADP in the presence of a proton or sodium gradient. F-type ATPases consist of two structural domains, F(1) containing the extramembraneous catalytic core and F(0) containing the membrane proton channel, linked together by a central stalk and a peripheral stalk. During catalysis, ATP synthesis in the catalytic domain of F(1) is coupled via a rotary mechanism of the central stalk subunits to proton translocation. Functionally, this protein is part of the stalk that links CF(0) to CF(1). It either transmits conformational changes from CF(0) to CF(1) or is implicated in proton conduction. The sequence is that of ATP synthase subunit delta from Rhodopseudomonas palustris (strain BisA53).